We begin with the raw amino-acid sequence, 329 residues long: Cytosolic arginine sensor for mTORC1 subunit 2 (329 aa).

ACT domains follow at residues 72-140 and 262-322; these read ADAT…HTLS and ELWK…HALK.

Belongs to the GATS family. As to quaternary structure, forms homodimers and heterodimers with CASTOR1. Interacts with the GATOR2 complex which is composed of MIOS, SEC13, SEH1L, WDR24 and WDR59; the interaction is not regulated by arginine.

The protein localises to the cytoplasm. It localises to the cytosol. In terms of biological role, functions as a negative regulator of the TORC1 signaling pathway through the GATOR complex. As part of homodimers or heterodimers with CASTOR1, directly binds and inhibits the GATOR subcomplex GATOR2 and thereby mTORC1. Does not directly bind arginine, but binding of arginine to CASTOR1 disrupts the interaction of CASTOR2-containing heterodimers with GATOR2 which can in turn activate mTORC1 and the TORC1 signaling pathway. The chain is Cytosolic arginine sensor for mTORC1 subunit 2 from Mus musculus (Mouse).